Here is a 503-residue protein sequence, read N- to C-terminus: Arabinose import ATP-binding protein AraG 1 (503 aa).

ABC transporter domains lie at L5–R240 and L253–G497. G37 to S44 contacts ATP.

It belongs to the ABC transporter superfamily. Arabinose importer (TC 3.A.1.2.2) family. In terms of assembly, the complex is composed of two ATP-binding proteins (AraG), two transmembrane proteins (AraH) and a solute-binding protein (AraF).

It is found in the cell inner membrane. The catalysed reaction is L-arabinose(out) + ATP + H2O = L-arabinose(in) + ADP + phosphate + H(+). Part of the ABC transporter complex AraFGH involved in arabinose import. Responsible for energy coupling to the transport system. The chain is Arabinose import ATP-binding protein AraG 1 from Burkholderia thailandensis (strain ATCC 700388 / DSM 13276 / CCUG 48851 / CIP 106301 / E264).